The chain runs to 354 residues: Major egg antigen (354 aa).

Residues 1 to 21 form a disordered region; sequence MSGGKQHNAVSIPVNREQRSF. SHSP domains follow at residues 122–233 and 251–354; these read SVND…VAVR and AKGV…AITH.

The protein belongs to the small heat shock protein (HSP20) family.

The sequence is that of Major egg antigen from Schistosoma mansoni (Blood fluke).